The following is a 308-amino-acid chain: Transaldolase (308 aa).

The active-site Schiff-base intermediate with substrate is the Lys125.

This sequence belongs to the transaldolase family. Type 1 subfamily. As to quaternary structure, homodimer.

Its subcellular location is the cytoplasm. The catalysed reaction is D-sedoheptulose 7-phosphate + D-glyceraldehyde 3-phosphate = D-erythrose 4-phosphate + beta-D-fructose 6-phosphate. It functions in the pathway carbohydrate degradation; pentose phosphate pathway; D-glyceraldehyde 3-phosphate and beta-D-fructose 6-phosphate from D-ribose 5-phosphate and D-xylulose 5-phosphate (non-oxidative stage): step 2/3. Functionally, transaldolase is important for the balance of metabolites in the pentose-phosphate pathway. The sequence is that of Transaldolase from Ectopseudomonas mendocina (strain ymp) (Pseudomonas mendocina).